A 569-amino-acid chain; its full sequence is Sugar transporter STL1 (569 aa).

The Cytoplasmic portion of the chain corresponds to 1–29; it reads MKDLKLSNFKGKFISRTSHWGLTGKKLRY. Residues 30–50 traverse the membrane as a helical segment; that stretch reads FITIASMTGFSLFGYDQGLMA. The Extracellular segment spans residues 51 to 79; sequence SLITGKQFNYEFPATKENGDHDRHATVVQ. The chain crosses the membrane as a helical span at residues 80 to 100; it reads GATTSCYELGCFAGSLFVMFC. Residues 101–107 lie on the Cytoplasmic side of the membrane; the sequence is GERIGRK. A helical transmembrane segment spans residues 108-128; the sequence is PLILMGSVITIIGAVISTCAF. Position 129 (Arg-129) is a topological domain, extracellular. The helical transmembrane segment at 130–150 threads the bilayer; sequence GYWALGQFIIGRVVTGVGTGL. At 151–168 the chain is on the cytoplasmic side; the sequence is NTSTIPVWQSEMSKAENR. Residues 169 to 189 form a helical membrane-spanning segment; it reads GLLVNLEGSTIAFGTMIAYWI. The Extracellular portion of the chain corresponds to 190-203; sequence DFGLSYTNSSVQWR. A glycan (N-linked (GlcNAc...) asparagine) is linked at Asn-197. The chain crosses the membrane as a helical span at residues 204–224; it reads FPVSMQIVFALFLLAFMIKLP. The Cytoplasmic portion of the chain corresponds to 225–291; sequence ESPRWLISQS…SRGRSQNLQR (67 aa). The chain crosses the membrane as a helical span at residues 292–312; the sequence is ALIAASTQFFQQFTGCNAAIY. Residues 313–330 are Extracellular-facing; the sequence is YSTVLFNKTIKLDYRLSM. A glycan (N-linked (GlcNAc...) asparagine) is linked at Asn-319. The chain crosses the membrane as a helical span at residues 331-351; the sequence is IIGGVFATIYALSTIGSFFLI. The Cytoplasmic segment spans residues 352 to 358; the sequence is EKLGRRK. Residues 359–379 form a helical membrane-spanning segment; that stretch reads LFLLGATGQAVSFTITFACLV. Residues 380–389 are Extracellular-facing; that stretch reads KENKENARGA. Residues 390–410 form a helical membrane-spanning segment; that stretch reads AVGLFLFITFFGLSLLSLPWI. Over 411-426 the chain is Cytoplasmic; that stretch reads YPPEIASMKVRASTNA. The helical transmembrane segment at 427 to 447 threads the bilayer; it reads FSTCTNWLCNFAVVMFTPIFI. Residues 448–453 lie on the Extracellular side of the membrane; sequence GQSGWG. A helical transmembrane segment spans residues 454-474; that stretch reads CYLFFAVMNYLYIPVIFFFYP. Topologically, residues 475 to 569 are cytoplasmic; that stretch reads ETAGRSLEEI…TVNDKANFEG (95 aa). Acidic residues predominate over residues 524–533; that stretch reads DDEMEKEDFG. The tract at residues 524–569 is disordered; that stretch reads DDEMEKEDFGEDRVEDTYNQINGDNSSSSSNIKNEDTVNDKANFEG. Positions 556–569 are enriched in basic and acidic residues; it reads KNEDTVNDKANFEG.

The protein belongs to the major facilitator superfamily. Sugar transporter (TC 2.A.1.1) family.

The protein resides in the membrane. The sequence is that of Sugar transporter STL1 (STL1) from Saccharomyces cerevisiae (strain ATCC 204508 / S288c) (Baker's yeast).